Reading from the N-terminus, the 178-residue chain is Large ribosomal subunit protein bL25 (178 aa).

It belongs to the bacterial ribosomal protein bL25 family. CTC subfamily. In terms of assembly, part of the 50S ribosomal subunit; part of the 5S rRNA/L5/L18/L25 subcomplex. Contacts the 5S rRNA. Binds to the 5S rRNA independently of L5 and L18.

Its function is as follows. This is one of the proteins that binds to the 5S RNA in the ribosome where it forms part of the central protuberance. The protein is Large ribosomal subunit protein bL25 of Wolinella succinogenes (strain ATCC 29543 / DSM 1740 / CCUG 13145 / JCM 31913 / LMG 7466 / NCTC 11488 / FDC 602W) (Vibrio succinogenes).